Here is a 646-residue protein sequence, read N- to C-terminus: Chaperone protein DnaK (646 aa).

Position 198 is a phosphothreonine; by autocatalysis (Thr198). Positions 603–646 are disordered; the sequence is EQAQQAGGAEGFDPNAFQGGDAGQQKADDGVVDAEFTEVKDDKK. A compositionally biased stretch (low complexity) spans 618–627; the sequence is AFQGGDAGQQ.

This sequence belongs to the heat shock protein 70 family.

Its function is as follows. Acts as a chaperone. The polypeptide is Chaperone protein DnaK (Acinetobacter baumannii (strain AB307-0294)).